Consider the following 180-residue polypeptide: Shikimate kinase (180 aa).

19–24 (GAGKTT) contacts ATP. T23 contacts Mg(2+). 3 residues coordinate substrate: D41, R65, and G87. An ATP-binding site is contributed by R125. R144 provides a ligand contact to substrate.

This sequence belongs to the shikimate kinase family. Monomer. Requires Mg(2+) as cofactor.

It localises to the cytoplasm. It carries out the reaction shikimate + ATP = 3-phosphoshikimate + ADP + H(+). Its pathway is metabolic intermediate biosynthesis; chorismate biosynthesis; chorismate from D-erythrose 4-phosphate and phosphoenolpyruvate: step 5/7. Functionally, catalyzes the specific phosphorylation of the 3-hydroxyl group of shikimic acid using ATP as a cosubstrate. The chain is Shikimate kinase from Acinetobacter baylyi (strain ATCC 33305 / BD413 / ADP1).